The primary structure comprises 614 residues: Fructokinase-like 2, chloroplastic (614 aa).

A chloroplast-targeting transit peptide spans 1 to 44 (MASLSFTQFLSFPRCNADVPCLLQSHGFVKFRGERWNGKQSFSM). 2 disordered regions span residues 47–75 (GRRKLSESAPLEEEGNDGNGAVVGKKPSK) and 542–592 (GYPP…YVMK). Residues 548–563 (DMEEEEDDEEEDEVES) show a composition bias toward acidic residues. The span at 571–583 (ITEKEYRTSKPYD) shows a compositional bias: basic and acidic residues.

Belongs to the carbohydrate kinase PfkB family. As to quaternary structure, interacts with CITRX/TRXz. Binds to FLN1 and PTAC5. Associates with the plastid-encoded RNA polymerase (PEP) complex.

It localises to the plastid. The protein localises to the chloroplast. Functionally, required for proper chloroplast development, most likely through regulating plastid-encoded polymerase (PEP) dependent chloroplast transcription. Acts as a component of the transcriptionally active plastid chromosome that is required for plastid gene expression. In Arabidopsis thaliana (Mouse-ear cress), this protein is Fructokinase-like 2, chloroplastic.